A 178-amino-acid polypeptide reads, in one-letter code: Cytochrome b6-f complex iron-sulfur subunit (178 aa).

The chain crosses the membrane as a helical span at residues 20-42; that stretch reads LLTFGTVTGVALGALYPVAQYFT. A Rieske domain is found at 71–161; it reads THPVGDRSLV…VSIEDDQVLV (91 aa). Cys107, His109, Cys125, and His128 together coordinate [2Fe-2S] cluster. Cys112 and Cys127 are oxidised to a cystine.

The protein belongs to the Rieske iron-sulfur protein family. In terms of assembly, the 4 large subunits of the cytochrome b6-f complex are cytochrome b6, subunit IV (17 kDa polypeptide, PetD), cytochrome f and the Rieske protein, while the 4 small subunits are PetG, PetL, PetM and PetN. The complex functions as a dimer. [2Fe-2S] cluster serves as cofactor.

The protein localises to the cellular thylakoid membrane. It carries out the reaction 2 oxidized [plastocyanin] + a plastoquinol + 2 H(+)(in) = 2 reduced [plastocyanin] + a plastoquinone + 4 H(+)(out). Its function is as follows. Component of the cytochrome b6-f complex, which mediates electron transfer between photosystem II (PSII) and photosystem I (PSI), cyclic electron flow around PSI, and state transitions. The sequence is that of Cytochrome b6-f complex iron-sulfur subunit from Prochlorococcus marinus (strain NATL1A).